The chain runs to 1902 residues: MQRKKKGLSILLAGTVALGALAVLPVGEIQAKAAISQQTKGSSLANTVTAATAKQAATDTTAATTNQAIATQLAAKGIDYNKLNKVQQQDIYVDVIVQMSAAPASENGTLRTDYSSTAEIQQETNKVIAAQASVKAAVEQVTQQTAGESYGYVVNGFSTKVRVVDIPKLKQIAGVKTVTLAKVYYPTDAKANSMANVQAVWSNYKYKGEGTVVSVIDSGIDPTHKDMRLSDDKDVKLTKSDVEKFTDTAKHGRYFNSKVPYGFNYADNNDTITDDTVDEQHGMHVAGIIGANGTGDDPAKSVVGVAPEAQLLAMKVFTNSDTSATTGSSTLVSAIEDSAKIGADVLNMSLGSDSGNQTLEDPELAAVQNANESGTAAVISAGNSGTSGSATEGVNKDYYGLQDNEMVGTPGTSRGATTVASAENTDVITQAVTITDGTGLQLGPGTIQLSSNDFTGSFDQKKFYVVKDASGNLSKGALADYTADAKGKIAIVKRGELSFDDKQKYAQAAGAAGLIIVNNDGTATPVTSMALTTTFPTFGLSSVTGQKLVDWVTAHPDDSLGVKIALTLVPNQKYTEDKMSDFTSYGPVSNLSFKPDITAPGGNIWSTQNNNGYTNMSGTSMASPFIAGSQALLKQALNNKNNPFYAYYKQLKGTALTDFLKTVEMNTAQPINDINYNNVIVSPRRQGAGLVDVKAAIDALEKNPSTVVAENGYPAVELKDFTSTDKTFKLTFTNSTTHELTYQMDSNTDTNAVYTSATDPNSGVLYDKKIDGAAIKAGSNITVPAGKTAQIEFTLSLPKSFDQQQFVEGFLNFKGSDGSRLNLPYMGFFGDWNDGKIVDSLNGITYSPAGGNFGTVPLLTNKNTGTQYYGGMVTDADGNQTVDDQAIAFSSDKNALYNDISMKYYLLRNISNVQVDILDGQGNKVTTLSSSTNLTKTYYNAHSQQYIYYNAPAWDGTYYDQRDGNIKTADDGSYTYRISGVPEGGDKRQVFDVPFKLDSKAPTVRHVALSAKTENGKTQYYLTAEAKDDLSGLDATKSVKTAINEVTNLDATFTDAGTTADGYTKIETPLSDEQAQALGNGDNSAELYLTDNASNATDQDASVQKPGSTSFDLIVNGGGIPDKISSTTTGYEANTQGGGTYTFSGTYPAAVDGTYTNAQGKKHDLNTTYDAATNSFTASMPVTNADYAAQVDLYADKAHTQLLKHFDTKVRLTAPTFTDLKFNNGSDQTSEATIKVTGTVSADTKTVNVGDTVAALDAQHHFSVDVPVNYGDNTIKVTATDEDGNTTTEQKTITSSYDPDMLKNSVTFDQGVTFGANEFNATSAKFYDPKTGIATITGKVKHPTTTLQVDGKQIPIKDDLTFSFTLDLGTLGQKPFGVVVGDTTQNKTFQEALTFILDAVAPTLSLESSTDAPVYTNDPNFQITGTATDNAQYLSLSINGSSVASQYVDININSGKPGHMAIDQPVKLLEGKNVLTVAVTDSEDNTTTKNITVYYEPKKTLAAPTVTPSTTEPAKTVTLTANSAATGETVQYSADGGKTYQDVPAAGVTVTANGTFKFKSTDLYGNESPAVDYVVTNIKADDPAQLQAAKQELTNLIASAKTLSASGKYDDATTTALAAATQKAQTALDQTNASVDSLTGANRDLQTAINQLAAKLPADKKTSLLNQLQSVKAALGTDLGNQTDPSTGKTFTAALDDLVAQAQAGTQTDDQHQATLAKVLDAVLAKLAEGIKAATPAEVGNAKDAATGKTWYADIADTLTSGQASADASDKLAHLQALQSLKTKVAAAVEAAKTVGKGDGTTGTSDKGGGQGTPAPAPGDIGKDKGDEGSQPSSGGNIPTNPATTTSTSTDDTTDRNGQLTSGKGALPKTGETTERPAFGFLGVIVVILMGVLGLKRKQREE.

The N-terminal stretch at 1 to 33 is a signal peptide; that stretch reads MQRKKKGLSILLAGTVALGALAVLPVGEIQAKA. Positions 34–187 are excised as a propeptide; the sequence is AISQQTKGSS…VTLAKVYYPT (154 aa). Residues 191 to 697 form the Peptidase S8 domain; it reads ANSMANVQAV…AGLVDVKAAI (507 aa). Active-site charge relay system residues include Asp217, His281, and Ser620. Residues 1796-1874 form a disordered region; the sequence is GKGDGTTGTS…GALPKTGETT (79 aa). The segment covering 1797-1812 has biased composition (gly residues); it reads KGDGTTGTSDKGGGQG. Residues 1830–1843 are compositionally biased toward polar residues; sequence SQPSSGGNIPTNPA. Residues 1867 to 1871 carry the LPXTG sorting signal motif; that stretch reads LPKTG. A Pentaglycyl murein peptidoglycan amidated threonine modification is found at Thr1870. Positions 1871–1902 are cleaved as a propeptide — removed by sortase; that stretch reads GETTERPAFGFLGVIVVILMGVLGLKRKQREE.

This sequence belongs to the peptidase S8 family.

It localises to the secreted. It is found in the cell wall. It carries out the reaction Endopeptidase activity with very broad specificity, although some subsite preference have been noted, e.g. large hydrophobic residues in the P1 and P4 positions, and Pro in the P2 position. Best known for its action on caseins, although it has been shown to hydrolyze hemoglobin and oxidized insulin B-chain.. Functionally, protease which breaks down milk proteins during the growth of the bacteria on milk. The sequence is that of PI-type proteinase (prtP) from Lactococcus lactis subsp. cremoris (Streptococcus cremoris).